Reading from the N-terminus, the 945-residue chain is Kinesin-like protein KIN-UA (945 aa).

The interval 1 to 54 is disordered; it reads MAANGRASVRPVERHGAPPRPAGRSRSVAPPSRRPSPSPSRARPAAADNDGGSD. Low complexity predominate over residues 22 to 31; it reads AGRSRSVAPP. The region spanning 57-399 is the Kinesin motor domain; the sequence is RVRVAVRLRP…IMFGQRAMKI (343 aa). Position 142–149 (142–149) interacts with ATP; it reads GQTGTGKT. A D-BOX motif is present at residues 369-377; it reads RTSLIVTIG. Positions 415–644 form a coiled coil; sequence YKKVEHEVDH…ILRLKQSLAD (230 aa). ARM repeat units follow at residues 683 to 722, 724 to 764, 766 to 806, and 808 to 847; these read RSNISKIFEEVGLPNVLALLKSDELEVQIHAVKVVANLAA, DVNQ…NLAM, GSNQ…NLCG, and EKLHVMLKQDGGIKALLGMFRTGHNEVIAQIARGMANFAK.

This sequence belongs to the TRAFAC class myosin-kinesin ATPase superfamily. Kinesin family. Ungrouped subfamily.

It localises to the cytoplasm. Its subcellular location is the cytoskeleton. The polypeptide is Kinesin-like protein KIN-UA (Oryza sativa subsp. japonica (Rice)).